Here is a 558-residue protein sequence, read N- to C-terminus: Hepatocyte nuclear factor 1-beta (558 aa).

The tract at residues 1–31 is dimerization; sequence MVSKLTSLQQELLSALLSSGVTKEVLIQALE. The HNF-p1 domain maps to 1-32; sequence MVSKLTSLQQELLSALLSSGVTKEVLIQALEE. S49, S52, S75, and S80 each carry phosphoserine. A disordered region spans residues 66-85; that stretch reads TNGHAKGRLSGDEGSEDGDD. In terms of domain architecture, POU-specific atypical spans 93-188; it reads KELQALNTEE…ILRQFNQTVQ (96 aa). The segment at residues 231–311 is a DNA-binding region (homeobox; HNF1-type); sequence MRRNRFKWGP…NRRKEEAFRQ (81 aa). Positions 323–348 are disordered; the sequence is THNLNPLLTHGSPHHQPSSSPPNKMS.

It belongs to the HNF1 homeobox family. Binds DNA as a dimer. Can form homodimer or heterodimer with HNF1-alpha. Interacts (via HNF-p1 domain) with PCBD1; the interaction increases its transactivation activity.

Its subcellular location is the nucleus. In terms of biological role, transcription factor that binds to the inverted palindrome 5'-GTTAATNATTAAC-3'. Binds to the FPC element in the cAMP regulatory unit of the PLAU gene. Transcriptional activity is increased by coactivator PCBD1. This is Hepatocyte nuclear factor 1-beta (Hnf1b) from Mus musculus (Mouse).